A 766-amino-acid chain; its full sequence is Single-minded homolog 1 (766 aa).

The bHLH domain occupies 1–53; the sequence is MKEKSKNAARTRREKENSEFYELAKLLPLPSAITSQLDKASIIRLTTSYLKMR. 2 consecutive PAS domains span residues 77–147 and 218–288; these read GREL…QPYH and PPSA…LVKG. The 44-residue stretch at 292–335 folds into the PAC domain; that stretch reads TKYYRFLAKHGGWVWVQSYATIVHNSRSSRPHCIVSVNYVLTDT. One can recognise a Single-minded C-terminal domain in the interval 336–766; sequence EYKGLQLSLD…GTSVIITNGS (431 aa). The segment covering 353 to 365 has biased composition (polar residues); the sequence is AFSYTSSSTPTMT. Disordered regions lie at residues 353 to 431, 528 to 563, and 642 to 662; these read AFSY…SQHD, WDED…EPSK, and SPRE…SSPN. The Nuclear localization signal motif lies at 368–387; the sequence is RKGAKSRLSSSKSKSRTSPY. A compositionally biased stretch (low complexity) spans 373–385; the sequence is SRLSSSKSKSRTS. The span at 394–404 shows a compositional bias: basic and acidic residues; that stretch reads HTERSESDHDS. The segment covering 649–662 has biased composition (polar residues); the sequence is DNSPTALSRISSPN.

Efficient DNA binding requires dimerization with another bHLH protein. Heterodimer; forms a heterodimer with ARNT, ARNT2.

It is found in the nucleus. Its function is as follows. Transcriptional factor that may have pleiotropic effects during embryogenesis and in the adult. In Pan troglodytes (Chimpanzee), this protein is Single-minded homolog 1 (SIM1).